Reading from the N-terminus, the 141-residue chain is uncharacterized protein (141 aa).

This is an uncharacterized protein from Listeria innocua serovar 6a (strain ATCC BAA-680 / CLIP 11262).